Consider the following 182-residue polypeptide: ATP-dependent protease subunit HslV (182 aa).

Thr-7 is a catalytic residue. Na(+) is bound by residues Gly-162, Cys-165, and Thr-168.

The protein belongs to the peptidase T1B family. HslV subfamily. As to quaternary structure, a double ring-shaped homohexamer of HslV is capped on each side by a ring-shaped HslU homohexamer. The assembly of the HslU/HslV complex is dependent on binding of ATP.

Its subcellular location is the cytoplasm. It carries out the reaction ATP-dependent cleavage of peptide bonds with broad specificity.. Allosterically activated by HslU binding. Its function is as follows. Protease subunit of a proteasome-like degradation complex believed to be a general protein degrading machinery. This Legionella pneumophila subsp. pneumophila (strain Philadelphia 1 / ATCC 33152 / DSM 7513) protein is ATP-dependent protease subunit HslV.